The sequence spans 163 residues: Phosphopantetheine adenylyltransferase (163 aa).

Ser-9 is a substrate binding site. Residues 9–10 and His-17 contribute to the ATP site; that span reads SF. Substrate-binding residues include Lys-41, Thr-73, and Arg-87. Residues 88–90, Glu-98, and 123–129 each bind ATP; these read GLR and YAYFSSS.

This sequence belongs to the bacterial CoaD family. Homohexamer. Mg(2+) is required as a cofactor.

It is found in the cytoplasm. The catalysed reaction is (R)-4'-phosphopantetheine + ATP + H(+) = 3'-dephospho-CoA + diphosphate. It functions in the pathway cofactor biosynthesis; coenzyme A biosynthesis; CoA from (R)-pantothenate: step 4/5. Reversibly transfers an adenylyl group from ATP to 4'-phosphopantetheine, yielding dephospho-CoA (dPCoA) and pyrophosphate. The polypeptide is Phosphopantetheine adenylyltransferase (Lactiplantibacillus plantarum (strain ATCC BAA-793 / NCIMB 8826 / WCFS1) (Lactobacillus plantarum)).